The chain runs to 348 residues: GTPase Obg (348 aa).

The region spanning Met-1–Met-159 is the Obg domain. In terms of domain architecture, OBG-type G spans Ala-160–Ser-331. GTP-binding positions include Gly-166–Ser-173, Phe-191–Ile-195, Asp-213–Gly-216, Asn-283–Asp-286, and Ser-312–Arg-314. The Mg(2+) site is built by Ser-173 and Thr-193.

The protein belongs to the TRAFAC class OBG-HflX-like GTPase superfamily. OBG GTPase family. In terms of assembly, monomer. Mg(2+) serves as cofactor.

It is found in the cytoplasm. Its function is as follows. An essential GTPase which binds GTP, GDP and possibly (p)ppGpp with moderate affinity, with high nucleotide exchange rates and a fairly low GTP hydrolysis rate. Plays a role in control of the cell cycle, stress response, ribosome biogenesis and in those bacteria that undergo differentiation, in morphogenesis control. This Syntrophobacter fumaroxidans (strain DSM 10017 / MPOB) protein is GTPase Obg.